Here is a 380-residue protein sequence, read N- to C-terminus: tRNA(Met) cytidine acetate ligase (380 aa).

Residues 7-20 (ITEYNPFHNGHLYH), glycine 100, asparagine 153, and arginine 178 contribute to the ATP site.

Belongs to the TmcAL family.

The protein localises to the cytoplasm. The catalysed reaction is cytidine(34) in elongator tRNA(Met) + acetate + ATP = N(4)-acetylcytidine(34) in elongator tRNA(Met) + AMP + diphosphate. Catalyzes the formation of N(4)-acetylcytidine (ac(4)C) at the wobble position of elongator tRNA(Met), using acetate and ATP as substrates. First activates an acetate ion to form acetyladenylate (Ac-AMP) and then transfers the acetyl group to tRNA to form ac(4)C34. The polypeptide is tRNA(Met) cytidine acetate ligase (Staphylococcus haemolyticus (strain JCSC1435)).